We begin with the raw amino-acid sequence, 283 residues long: Elongation factor Ts (283 aa).

Positions 80-83 (TDFV) are involved in Mg(2+) ion dislocation from EF-Tu.

Belongs to the EF-Ts family.

It localises to the cytoplasm. Functionally, associates with the EF-Tu.GDP complex and induces the exchange of GDP to GTP. It remains bound to the aminoacyl-tRNA.EF-Tu.GTP complex up to the GTP hydrolysis stage on the ribosome. This Salmonella gallinarum (strain 287/91 / NCTC 13346) protein is Elongation factor Ts.